A 1237-amino-acid chain; its full sequence is Zinc finger protein ZFAT (1237 aa).

The C2H2-type 1 zinc-finger motif lies at Phe12–His35. The tract at residues Arg50–Arg110 is disordered. Over residues Met70 to Thr81 the composition is skewed to basic residues. The segment at Leu116 to Asn141 adopts a C2H2-type 2; degenerate zinc-finger fold. A disordered region spans residues Gly147–Glu188. A compositionally biased stretch (basic and acidic residues) spans Asp156–Gly186. 7 C2H2-type zinc fingers span residues Phe271–His293, Tyr299–His321, Phe326–His349, Gln354–His377, Tyr404–His426, Phe432–His454, and Tyr458–His481. Zn(2+)-binding residues include Cys273, Cys276, His289, His293, Cys301, Cys304, His317, His321, Cys328, Cys331, His344, His349, Cys356, Cys359, His372, His377, Cys406, Cys409, His422, and His426. Zn(2+)-binding residues include Cys460, Cys463, His476, and His481. 2 disordered regions span residues Val551–Cys576 and Ser601–Ala671. Polar residues predominate over residues Thr565–Ser574. Residues Ser601–Asp617 show a composition bias toward low complexity. 4 consecutive C2H2-type zinc fingers follow at residues Leu737–His759, Tyr765–His788, Leu793–His817, and Tyr825–His848. Residues Cys767, Cys770, His783, His788, Cys795, Cys800, His813, His817, Cys827, Cys830, His843, His848, Cys877, Cys880, His894, His898, Cys906, Cys909, His922, His926, Cys934, Cys937, His950, and Leu953 each contribute to the Zn(2+) site. Residues Met875 to His898 form a C2H2-type 14; degenerate zinc finger. 5 C2H2-type zinc fingers span residues Phe904–His926, His932–His954, Phe961–His983, Phe989–His1012, and Leu1036–His1059.

Detected in spleen and thymus but not in liver, muscle, heart, kidney, brain, bone marrow or pancreas. Expressed in CD19+, CD4+ and CD8+ lymphocytes but not in CD11b+ lymphocytes or peritoneal macrophages (at protein level).

The protein resides in the nucleus. It is found in the cytoplasm. The protein localises to the cytosol. Its function is as follows. May be involved in transcriptional regulation. Overexpression causes down-regulation of a number of genes involved in the immune response. Some genes are also up-regulated. The polypeptide is Zinc finger protein ZFAT (Zfat) (Mus musculus (Mouse)).